Reading from the N-terminus, the 380-residue chain is Cytochrome b (380 aa).

A run of 4 helical transmembrane segments spans residues 34 to 54, 78 to 99, 114 to 134, and 179 to 199; these read FGSLLGLCLIIQILTGLFLAM, WLIRNTHANGASMFFICVYLHI, WNIGVIILLLLMATAFVGYVL, and FFTFHFLLPFVIVALTMVHLL. Positions 84 and 98 each coordinate heme b. Positions 183 and 197 each coordinate heme b. Residue His202 coordinates a ubiquinone. The next 4 membrane-spanning stretches (helical) occupy residues 227–247, 289–309, 321–341, and 348–368; these read YKDLLGFFILLFFLTFLALFT, LGGVLALAFSILILLLVPILH, ISQLLFWLLVANTIILTWIGG, and FITIGQIASITYFSFFLILFP.

This sequence belongs to the cytochrome b family. In terms of assembly, the cytochrome bc1 complex contains 3 respiratory subunits (MT-CYB, CYC1 and UQCRFS1), 2 core proteins (UQCRC1 and UQCRC2) and probably 6 low-molecular weight proteins. Requires heme b as cofactor.

The protein resides in the mitochondrion inner membrane. Functionally, component of the ubiquinol-cytochrome c reductase complex (complex III or cytochrome b-c1 complex) that is part of the mitochondrial respiratory chain. The b-c1 complex mediates electron transfer from ubiquinol to cytochrome c. Contributes to the generation of a proton gradient across the mitochondrial membrane that is then used for ATP synthesis. This is Cytochrome b (mt-cyb) from Pastinachus sephen (Cowtail stingray).